The sequence spans 93 residues: MDASMMAGLDGLPEEDKAKMASMIDQLQLRDSLRMYNSLVERCFVDCVDSFTRKSLQKQEETCVMRCAEKFLKHTMRVGMRFAELNQNAPTQD.

The short motif at 43–67 is the Twin CX3C motif element; sequence CFVDCVDSFTRKSLQKQEETCVMRC. 2 cysteine pairs are disulfide-bonded: C43–C67 and C47–C63.

The protein belongs to the small Tim family. In terms of assembly, heterohexamer; composed of 3 copies of TIM9 and 3 copies of TIM10, named soluble 70 kDa complex. The complex associates with the TIM22 component of the TIM22 complex. Interacts with multi-pass transmembrane proteins in transit. Expressed in roots, flowers, young cotyledons and leaves.

The protein resides in the mitochondrion intermembrane space. Its function is as follows. Mitochondrial intermembrane chaperone that participates in the import and insertion of multi-pass transmembrane proteins into the mitochondrial inner membrane. May also be required for the transfer of beta-barrel precursors from the TOM complex to the sorting and assembly machinery (SAM complex) of the outer membrane. Acts as a chaperone-like protein that protects the hydrophobic precursors from aggregation and guide them through the mitochondrial intermembrane space. The sequence is that of Mitochondrial import inner membrane translocase subunit TIM9 (TIM9) from Arabidopsis thaliana (Mouse-ear cress).